Consider the following 290-residue polypeptide: MLKVVLITGISGSGKSVALRMLEDAGYTCIDNLPVRFLSEFVAGARDDGLERVAIAIDVRSPGELAELPGVITAMRAMGTSLRVVFLDANTHTLAQRYSESRRRHPLTDRLSRGGQTPSLLDCIALERDLLAPLRDQEHVIDTSDLTPGQLRAWIRDLVQADRPPLVLTFESFAYKRGVPSDADLVFDVRCLPNPYYDRTLRPLTGRDEPVATWLAGFEIVGQMIDDIAGYLRRWLPQYTQDTRNYLTVAIGCTGGQHRSVYVVEQLALRFAEHDPLLVRHRTQLPDEST.

ATP is bound at residue Gly-9–Ser-16. Asp-58–Ser-61 is a GTP binding site.

It belongs to the RapZ-like family.

Its function is as follows. Displays ATPase and GTPase activities. This chain is Nucleotide-binding protein Bpet0443, found in Bordetella petrii (strain ATCC BAA-461 / DSM 12804 / CCUG 43448).